The chain runs to 499 residues: L-arabinose isomerase (499 aa).

Glu-306, Glu-333, His-350, and His-449 together coordinate Mn(2+).

It belongs to the arabinose isomerase family. The cofactor is Mn(2+).

It catalyses the reaction beta-L-arabinopyranose = L-ribulose. Its pathway is carbohydrate degradation; L-arabinose degradation via L-ribulose; D-xylulose 5-phosphate from L-arabinose (bacterial route): step 1/3. Catalyzes the conversion of L-arabinose to L-ribulose. This is L-arabinose isomerase from Aeromonas hydrophila subsp. hydrophila (strain ATCC 7966 / DSM 30187 / BCRC 13018 / CCUG 14551 / JCM 1027 / KCTC 2358 / NCIMB 9240 / NCTC 8049).